A 122-amino-acid polypeptide reads, in one-letter code: MIQAFTRLNVADNTGAKEVMCIKVLGGSKRRYAQVGDVIIASVKKATPTAKVKKGKVVKAVIVRTAKEIHRENGSLIRFDDNAAVILDDKREPIGTRIFGPIAREVRYSGFMKIVSLAPEVV.

This sequence belongs to the universal ribosomal protein uL14 family. In terms of assembly, part of the 50S ribosomal subunit. Forms a cluster with proteins L3 and L19. In the 70S ribosome, L14 and L19 interact and together make contacts with the 16S rRNA in bridges B5 and B8.

In terms of biological role, binds to 23S rRNA. Forms part of two intersubunit bridges in the 70S ribosome. This chain is Large ribosomal subunit protein uL14, found in Sulfurimonas denitrificans (strain ATCC 33889 / DSM 1251) (Thiomicrospira denitrificans (strain ATCC 33889 / DSM 1251)).